Here is a 176-residue protein sequence, read N- to C-terminus: Ribosome rescue factor SmrB (176 aa).

The region spanning L93–D168 is the Smr domain.

Belongs to the SmrB family. As to quaternary structure, associates with collided ribosomes, but not with correctly translating polysomes.

Its function is as follows. Acts as a ribosome collision sensor. Detects stalled/collided disomes (pairs of ribosomes where the leading ribosome is stalled and a second ribosome has collided with it) and endonucleolytically cleaves mRNA at the 5' boundary of the stalled ribosome. Stalled/collided disomes form a new interface (primarily via the 30S subunits) that binds SmrB. Cleaved mRNA becomes available for tmRNA ligation, leading to ribosomal subunit dissociation and rescue of stalled ribosomes. This is Ribosome rescue factor SmrB from Shewanella sp. (strain W3-18-1).